Here is a 340-residue protein sequence, read N- to C-terminus: Arginase 1, mitochondrial (340 aa).

The transit peptide at 1 to 24 (MGGVAAGTRWIHHVRRLSAAKVST) directs the protein to the mitochondrion. 4 residues coordinate Mn(2+): histidine 159, aspartate 183, histidine 185, and aspartate 187. Residues 185 to 189 (HPDIY) and 193 to 195 (EGN) contribute to the substrate site. Residues aspartate 268 and aspartate 270 each coordinate Mn(2+). Residue glutamate 311 coordinates substrate.

It belongs to the arginase family. It depends on Mn(2+) as a cofactor.

The protein resides in the mitochondrion. It carries out the reaction L-arginine + H2O = urea + L-ornithine. Its pathway is nitrogen metabolism; urea cycle; L-ornithine and urea from L-arginine: step 1/1. Catalyzes the hydrolysis of L-arginine to urea and L-ornithine. The latter can be utilized in the urea cycle or as a precursor for the synthesis of both polyamines and proline. This is Arginase 1, mitochondrial from Oryza sativa subsp. indica (Rice).